Here is a 496-residue protein sequence, read N- to C-terminus: MVSQTAAAAAPADPIVDVEMESAEDAEAAKKDAELLAVQEIRDHARQIDKAVVSKEPRFILRVLRSLPTTRRKLALVVVRSLAVQLYPAGPERDGIMAYIEDYPAGAQEPELPRPRAAIKSPVPEVDAYFHLLLLVRLLDKNDLPKATKCSQDLMAKVVGQNRRSLDLIAAKSYFYHSRVAELNNDLESIRSFLHSRLRTATLRNDFEGQAVLINCLLRNYLHYSLYDQADKLVNKSVFPETASNNECARFLYYLGRIKAAKLEYSVAHKQLVQALRKAPQQAAVGFRQTVQKLVIVVELLLGDIPERKVFRQAALRRSLGPYFQLTQAVRMGNLQRFGEVLVNFGEQFRQDHTFTLIIRLRHNVIKTAIRSIGLAYSRISPQDIARKLGLDSPEDAEFIVAKAIRDGVIEATLDPEKGYMRSKESTDIYSTREPQLAFHQRISFCLDLHNQSVKAMRYPPKSYGKELESAEERREREQQDLELAKEMAEEDDDGF.

Positions 249–428 constitute a PCI domain; the sequence is ARFLYYLGRI…GYMRSKESTD (180 aa). The disordered stretch occupies residues 458-480; sequence RYPPKSYGKELESAEERREREQQ. Residues 464 to 480 show a composition bias toward basic and acidic residues; that stretch reads YGKELESAEERREREQQ.

The protein belongs to the proteasome subunit S3 family. In terms of assembly, the 26S proteasome is composed of a core protease, known as the 20S proteasome, capped at one or both ends by the 19S regulatory complex (RC). The RC is composed of at least 18 different subunits in two subcomplexes, the base and the lid, which form the portions proximal and distal to the 20S proteolytic core, respectively.

In terms of biological role, acts as a regulatory subunit of the 26 proteasome which is involved in the ATP-dependent degradation of ubiquitinated proteins. The protein is Probable 26S proteasome non-ATPase regulatory subunit 3 (Dox-A2) of Anopheles gambiae (African malaria mosquito).